Reading from the N-terminus, the 438-residue chain is Adenylosuccinate synthetase (438 aa).

Residues 12–18 (GDEGKGK) and 40–42 (GHT) contribute to the GTP site. Aspartate 13 (proton acceptor) is an active-site residue. The Mg(2+) site is built by aspartate 13 and glycine 40. Residues 13-16 (DEGK), 38-41 (NAGH), threonine 128, arginine 142, glutamine 223, threonine 238, and arginine 302 contribute to the IMP site. The active-site Proton donor is histidine 41. 298–304 (TTTGRPR) provides a ligand contact to substrate. Residues arginine 304, 330–332 (KLD), and 412–414 (GVG) contribute to the GTP site.

This sequence belongs to the adenylosuccinate synthetase family. In terms of assembly, homodimer. Mg(2+) is required as a cofactor.

It localises to the cytoplasm. It catalyses the reaction IMP + L-aspartate + GTP = N(6)-(1,2-dicarboxyethyl)-AMP + GDP + phosphate + 2 H(+). The protein operates within purine metabolism; AMP biosynthesis via de novo pathway; AMP from IMP: step 1/2. Plays an important role in the de novo pathway of purine nucleotide biosynthesis. Catalyzes the first committed step in the biosynthesis of AMP from IMP. The sequence is that of Adenylosuccinate synthetase from Leifsonia xyli subsp. xyli (strain CTCB07).